We begin with the raw amino-acid sequence, 396 residues long: Cytochrome c biogenesis protein Ccs1 (396 aa).

3 helical membrane passes run 22–42, 79–99, and 162–182; these read LKFSITLFIIICIVSAIGTII, SNFYLILLLCLSFSLFFCSLK, and AGPLLIHLSLILILLGSAIHA.

It belongs to the Ccs1/CcsB family. As to quaternary structure, may interact with CcsA.

It localises to the plastid. It is found in the chloroplast thylakoid membrane. In terms of biological role, required during biogenesis of c-type cytochromes (cytochrome c6 and cytochrome f) at the step of heme attachment. In Cyanidium caldarium (Red alga), this protein is Cytochrome c biogenesis protein Ccs1.